A 98-amino-acid polypeptide reads, in one-letter code: MADATKNPIADLSESEQLELSKFIESEQQKVKLQQAIHQFTSTCWPKCIGNIGNKLDKSEEQCLQNCVERFLDCNFHIIKRYALEKFGFLFCWLGFSC.

The Twin CX3C motif signature appears at 44-67; the sequence is CWPKCIGNIGNKLDKSEEQCLQNC. 2 disulfide bridges follow: Cys-44–Cys-67 and Cys-48–Cys-63.

Belongs to the small Tim family. As to quaternary structure, heterohexamer; composed of 3 copies of TIM8 and 3 copies of TIM13, named soluble 70 kDa complex. Associates with the TIM22 complex, whose core is composed of TIM22 and TIM54. Interacts with the transmembrane regions of multi-pass transmembrane proteins in transit.

The protein localises to the mitochondrion inner membrane. Its function is as follows. Mitochondrial intermembrane chaperone that participates in the import and insertion of some multi-pass transmembrane proteins into the mitochondrial inner membrane. Also required for the transfer of beta-barrel precursors from the TOM complex to the sorting and assembly machinery (SAM complex) of the outer membrane. Acts as a chaperone-like protein that protects the hydrophobic precursors from aggregation and guide them through the mitochondrial intermembrane space. The TIM8-TIM13 complex is non essential and only mediates the import of few proteins, while the predominant TIM9-TIM10 70 kDa complex is crucial and mediates the import of much more proteins. This Schizosaccharomyces pombe (strain 972 / ATCC 24843) (Fission yeast) protein is Mitochondrial import inner membrane translocase subunit tim8 (tim8).